A 223-amino-acid polypeptide reads, in one-letter code: N-terminal Xaa-Pro-Lys N-methyltransferase 1 (223 aa).

S-adenosyl-L-methionine-binding positions include Gly69, Arg74, 91-93, 119-120, and Gln135; these read DVT and LQ.

This sequence belongs to the methyltransferase superfamily. NTM1 family.

Its subcellular location is the nucleus. The enzyme catalyses N-terminal L-alanyl-L-prolyl-L-lysyl-[protein] + 3 S-adenosyl-L-methionine = N-terminal N,N,N-trimethyl-L-alanyl-L-prolyl-L-lysyl-[protein] + 3 S-adenosyl-L-homocysteine + 3 H(+). It catalyses the reaction N-terminal L-seryl-L-prolyl-L-lysyl-[protein] + 3 S-adenosyl-L-methionine = N-terminal N,N,N-trimethyl-L-seryl-L-prolyl-L-lysyl-[protein] + 3 S-adenosyl-L-homocysteine + 3 H(+). The catalysed reaction is N-terminal L-prolyl-L-prolyl-L-lysyl-[protein] + 2 S-adenosyl-L-methionine = N-terminal N,N-dimethyl-L-prolyl-L-prolyl-L-lysyl-[protein] + 2 S-adenosyl-L-homocysteine + 2 H(+). Distributive alpha-N-methyltransferase that methylates the N-terminus of target proteins containing the N-terminal motif [Ala/Gly/Pro/Ser]-Pro-Lys when the initiator Met is cleaved. Specifically catalyzes mono-, di- or tri-methylation of the exposed alpha-amino group of the Ala, Gly or Ser residue in the [Ala/Gly/Ser]-Pro-Lys motif and mono- or di-methylation of Pro in the Pro-Pro-Lys motif. Required during mitosis for normal bipolar spindle formation and chromosome segregation via its action on target proteins. The chain is N-terminal Xaa-Pro-Lys N-methyltransferase 1 (ntmt1) from Danio rerio (Zebrafish).